Reading from the N-terminus, the 220-residue chain is MNVKIEQSWRKYLVPEFEKPYFKQLVEFIKNEYASKIIYPKGNKIFSAFDKTPLDRVKVVILGQDPYHEPGQANGLCFSVNEGIPLPPSLQNIYKEVKDDIGIVSSTSGNLERWSEQGVLLLNATLTVQAHKAGSHQKKGWEKFTDAIIHIILKEKQHIVFILWGTYAQKKGAFIPSDKHLILKSAHPSPFSANKGFFGSKPFSKTNDYLKKTGQTVITW.

Asp65 (proton acceptor) is an active-site residue.

The protein belongs to the uracil-DNA glycosylase (UDG) superfamily. UNG family.

Its subcellular location is the cytoplasm. It catalyses the reaction Hydrolyzes single-stranded DNA or mismatched double-stranded DNA and polynucleotides, releasing free uracil.. Its function is as follows. Excises uracil residues from the DNA which can arise as a result of misincorporation of dUMP residues by DNA polymerase or due to deamination of cytosine. The polypeptide is Uracil-DNA glycosylase (Azobacteroides pseudotrichonymphae genomovar. CFP2).